Consider the following 434-residue polypeptide: Bcl-2-like protein 13 (434 aa).

Positions 14–30 (ETKYVVLSYLGLLSQEK) match the BH4 motif. At Ser35 the chain carries Phosphoserine. Positions 97-113 (IEDCLAHLGERVSQDLK) match the BH3 motif. The BH1 motif lies at 144–154 (ASGWNKLLVPL). The BH2 motif lies at 190 to 203 (FIIQQGGWGSVFSL). Positions 224 to 245 (LPSDNSGQVSPPESPTVTTSWQ) are disordered. Polar residues predominate over residues 226–245 (SDNSGQVSPPESPTVTTSWQ). The stretch at 243–253 (SWQSESLPVSL) is one A repeat. A phosphoserine mark is found at Ser256, Ser258, Ser300, Ser343, Ser347, Ser377, and Ser387. One copy of the A; approximate repeat lies at 258–268 (SWHTESLPVSL). The disordered stretch occupies residues 282–303 (EVKSLDSSGAGEKSENNSSNSD). Residues 363-398 (RPEAVERAEGAAQLSEERAGSRKKSHTGEAAAVRGA) are disordered. The span at 365-382 (EAVERAEGAAQLSEERAG) shows a compositional bias: basic and acidic residues. The helical transmembrane segment at 409 to 429 (VLLFGGAAAVAILAVAVGVAL) threads the bilayer.

Belongs to the Bcl-2 family. In terms of assembly, monomer.

The protein localises to the mitochondrion membrane. Its function is as follows. May promote the activation of caspase-3 and apoptosis. This chain is Bcl-2-like protein 13 (Bcl2l13), found in Mus musculus (Mouse).